Reading from the N-terminus, the 428-residue chain is Serine hydroxymethyltransferase (428 aa).

(6S)-5,6,7,8-tetrahydrofolate contacts are provided by residues Leu-117 and 121-123 (GHL). An N6-(pyridoxal phosphate)lysine modification is found at Lys-226.

Belongs to the SHMT family. As to quaternary structure, homodimer. Pyridoxal 5'-phosphate is required as a cofactor.

It localises to the cytoplasm. It carries out the reaction (6R)-5,10-methylene-5,6,7,8-tetrahydrofolate + glycine + H2O = (6S)-5,6,7,8-tetrahydrofolate + L-serine. The protein operates within one-carbon metabolism; tetrahydrofolate interconversion. It functions in the pathway amino-acid biosynthesis; glycine biosynthesis; glycine from L-serine: step 1/1. Catalyzes the reversible interconversion of serine and glycine with tetrahydrofolate (THF) serving as the one-carbon carrier. This reaction serves as the major source of one-carbon groups required for the biosynthesis of purines, thymidylate, methionine, and other important biomolecules. Also exhibits THF-independent aldolase activity toward beta-hydroxyamino acids, producing glycine and aldehydes, via a retro-aldol mechanism. This is Serine hydroxymethyltransferase from Aquifex aeolicus (strain VF5).